Here is a 273-residue protein sequence, read N- to C-terminus: Aquaporin NIP1-4 (273 aa).

A run of 2 helical transmembrane segments spans residues L59–V79 and V86–V106. The NPA 1 signature appears at N115 to A117. The next 3 membrane-spanning stretches (helical) occupy residues A133–F155, S174–T194, and A198–A218. An NPA 2 motif is present at residues N227–A229. A helical membrane pass occupies residues W245 to I265.

Belongs to the MIP/aquaporin (TC 1.A.8) family. NIP (TC 1.A.8.12) subfamily. As to expression, expressed in leaves.

The protein resides in the membrane. Its function is as follows. Aquaporins facilitate the transport of water and small neutral solutes across cell membranes. The chain is Aquaporin NIP1-4 (NIP1-4) from Oryza sativa subsp. japonica (Rice).